A 294-amino-acid chain; its full sequence is UPF0761 membrane protein YPTS_0028 (294 aa).

7 helical membrane-spanning segments follow: residues 44-64 (LLSL…FPMF), 67-87 (ISIK…GDII), 108-128 (GLIV…NIIW), 136-156 (LVFS…LVGA), 185-205 (VFPL…VPTV), 212-232 (ALIG…GFAM), and 246-266 (VLAV…IVLL).

The protein belongs to the UPF0761 family.

The protein localises to the cell inner membrane. The protein is UPF0761 membrane protein YPTS_0028 of Yersinia pseudotuberculosis serotype IB (strain PB1/+).